Reading from the N-terminus, the 328-residue chain is H-2 class I histocompatibility antigen, K-Q alpha chain (328 aa).

Residues 1–71 are alpha-1; sequence PRFISVGYVD…LLRYYNQSAG (71 aa). Residues 1 to 265 are Extracellular-facing; that stretch reads PRFISVGYVD…EPPPSAVSNT (265 aa). N-linked (GlcNAc...) asparagine glycosylation is present at N67. Residues 72–163 are alpha-2; it reads GSHTIQRMYG…KNGNATLLRT (92 aa). C82 and C145 are disulfide-bonded. A glycan (N-linked (GlcNAc...) asparagine) is linked at N157. The alpha-3 stretch occupies residues 164 to 255; the sequence is DSPKAHVTHH…GLPKPLTLRW (92 aa). One can recognise an Ig-like C1-type domain in the interval 166 to 252; that stretch reads PKAHVTHHSR…YHQGLPKPLT (87 aa). C184 and C240 are oxidised to a cystine. The tract at residues 256–265 is connecting peptide; it reads EPPPSAVSNT. The chain crosses the membrane as a helical span at residues 266 to 289; sequence VIIAVLVVLGAAIVTGAVVAFVMM. Topologically, residues 290–328 are cytoplasmic; that stretch reads RRRNTGGKGGDYALAPGSQTSDLSLPDCKVMVHDPHSLA. Residues S310 and S313 each carry the phosphoserine modification.

Belongs to the MHC class I family. As to quaternary structure, heterodimer of an alpha chain and a beta chain (beta-2-microglobulin).

It localises to the membrane. Its function is as follows. Involved in the presentation of foreign antigens to the immune system. This chain is H-2 class I histocompatibility antigen, K-Q alpha chain (H2-K1), found in Mus musculus (Mouse).